Reading from the N-terminus, the 799-residue chain is Lon protease (799 aa).

A Lon N-terminal domain is found at 7-200 (LPVLPLRDIV…KVFALMEGEI (194 aa)). Residue 352–359 (GPPGVGKT) coordinates ATP. Residues 587–768 (VDQVGIVTGL…DEVLKHALTG (182 aa)) form the Lon proteolytic domain. Active-site residues include S674 and K717. The segment at 772–799 (PVEWNEAEEPITTSAKKDDGDSDAMLTH) is disordered.

Belongs to the peptidase S16 family. As to quaternary structure, homohexamer. Organized in a ring with a central cavity.

It is found in the cytoplasm. It catalyses the reaction Hydrolysis of proteins in presence of ATP.. Functionally, ATP-dependent serine protease that mediates the selective degradation of mutant and abnormal proteins as well as certain short-lived regulatory proteins. Required for cellular homeostasis and for survival from DNA damage and developmental changes induced by stress. Degrades polypeptides processively to yield small peptide fragments that are 5 to 10 amino acids long. Binds to DNA in a double-stranded, site-specific manner. CcrM is an important target of the Lon protease pathway in C.crescentus. The chain is Lon protease from Caulobacter vibrioides (strain ATCC 19089 / CIP 103742 / CB 15) (Caulobacter crescentus).